The following is a 332-amino-acid chain: Holliday junction branch migration complex subunit RuvB (332 aa).

The tract at residues 1 to 181 (MARILDNNVM…FGITGHMEYY (181 aa)) is large ATPase domain (RuvB-L). ATP is bound by residues L20, R21, G62, K65, T66, T67, 128-130 (EDF), R171, Y181, and R218. Residue T66 participates in Mg(2+) binding. A small ATPAse domain (RuvB-S) region spans residues 182 to 252 (QEKDLTEIVE…ITDRALTMLD (71 aa)). The head domain (RuvB-H) stretch occupies residues 255–332 (REGLNYIDQK…RHLGYPYQNT (78 aa)). DNA-binding residues include R291, R310, R312, and R315.

Belongs to the RuvB family. In terms of assembly, homohexamer. Forms an RuvA(8)-RuvB(12)-Holliday junction (HJ) complex. HJ DNA is sandwiched between 2 RuvA tetramers; dsDNA enters through RuvA and exits via RuvB. An RuvB hexamer assembles on each DNA strand where it exits the tetramer. Each RuvB hexamer is contacted by two RuvA subunits (via domain III) on 2 adjacent RuvB subunits; this complex drives branch migration. In the full resolvosome a probable DNA-RuvA(4)-RuvB(12)-RuvC(2) complex forms which resolves the HJ.

Its subcellular location is the cytoplasm. The enzyme catalyses ATP + H2O = ADP + phosphate + H(+). Its function is as follows. The RuvA-RuvB-RuvC complex processes Holliday junction (HJ) DNA during genetic recombination and DNA repair, while the RuvA-RuvB complex plays an important role in the rescue of blocked DNA replication forks via replication fork reversal (RFR). RuvA specifically binds to HJ cruciform DNA, conferring on it an open structure. The RuvB hexamer acts as an ATP-dependent pump, pulling dsDNA into and through the RuvAB complex. RuvB forms 2 homohexamers on either side of HJ DNA bound by 1 or 2 RuvA tetramers; 4 subunits per hexamer contact DNA at a time. Coordinated motions by a converter formed by DNA-disengaged RuvB subunits stimulates ATP hydrolysis and nucleotide exchange. Immobilization of the converter enables RuvB to convert the ATP-contained energy into a lever motion, pulling 2 nucleotides of DNA out of the RuvA tetramer per ATP hydrolyzed, thus driving DNA branch migration. The RuvB motors rotate together with the DNA substrate, which together with the progressing nucleotide cycle form the mechanistic basis for DNA recombination by continuous HJ branch migration. Branch migration allows RuvC to scan DNA until it finds its consensus sequence, where it cleaves and resolves cruciform DNA. The protein is Holliday junction branch migration complex subunit RuvB of Streptococcus pyogenes serotype M18 (strain MGAS8232).